Reading from the N-terminus, the 279-residue chain is uncharacterized protein (279 aa).

Over residues 1-29 the composition is skewed to low complexity; sequence MSSRYTSSYTPSSRYGSGWDYSSSYSSSR. Disordered stretches follow at residues 1–111 and 137–233; these read MSSR…APRE and LTLA…AEAL. Positions 30-44 are enriched in basic and acidic residues; sequence TSRDRDTGSYRDRDY. A compositionally biased stretch (low complexity) spans 45 to 59; that stretch reads SSTSYTSTRPRYSTY. The segment covering 142-153 has biased composition (acidic residues); the sequence is EPEESEEEEDDE. A compositionally biased stretch (low complexity) spans 170 to 186; the sequence is ESSPVSSPVKEVSSAAS. Residues 189–205 show a composition bias toward polar residues; that stretch reads ANDNGNETENRTPSPTV. The span at 221–233 shows a compositional bias: basic and acidic residues; it reads SDVKKEGGDAEAL.

This is an uncharacterized protein from Caenorhabditis elegans.